A 229-amino-acid chain; its full sequence is Germin-like protein 3-6 (229 aa).

The first 31 residues, 1–31, serve as a signal peptide directing secretion; sequence MEHSFKTIAAGVVIVVLLLQQAPVLIRATDA. A disulfide bond links Cys-38 and Cys-53. A Cupin type-1 domain is found at 67 to 219; that stretch reads SKIATGGDVN…ALRVDAGVVE (153 aa). N-linked (GlcNAc...) asparagine glycans are attached at residues Asn-80 and Asn-83. 4 residues coordinate Mn(2+): His-116, His-118, Glu-123, and His-165.

The protein belongs to the germin family. As to quaternary structure, oligomer (believed to be a pentamer but probably hexamer).

The protein resides in the secreted. The protein localises to the extracellular space. It is found in the apoplast. In terms of biological role, may play a role in plant defense. Probably has no oxalate oxidase activity even if the active site is conserved. This chain is Germin-like protein 3-6, found in Oryza sativa subsp. japonica (Rice).